A 369-amino-acid polypeptide reads, in one-letter code: MKSGRFIGVMSGTSLDGVDVVLATIDEHRVAQLASLSWPIPVSLKQAVLDICQGQQLTLSQFGQLDTQLGRLFADAVNALLKEQNLQARDIVAIGCHGQTVWHEPTGVAPHTLQIGDNNQIVARTGITVVGDFRRRDIALGGHGAPLVPAFHHALLAHPTERRMVLNIGGIANLSLLIPGQPVGGYDTGPGNMLMDAWIWRQAGKPYDKDAEWARAGKVILPLLQNMLSDPYFSQPAPKSTGREYFNYGWLERHLRHFPGVDPRDVQATLAELTAVTISEQVLLSGGCERLMVCGGGGRNPLLMARLAALLPGTEVTTTDAVGISGDDMEALAFAWLAWRTLAGLPGNLPSVTGASQETVLGAIFPANP.

12 to 19 (GTSLDGVD) lines the ATP pocket.

This sequence belongs to the anhydro-N-acetylmuramic acid kinase family.

The enzyme catalyses 1,6-anhydro-N-acetyl-beta-muramate + ATP + H2O = N-acetyl-D-muramate 6-phosphate + ADP + H(+). Its pathway is amino-sugar metabolism; 1,6-anhydro-N-acetylmuramate degradation. It participates in cell wall biogenesis; peptidoglycan recycling. In terms of biological role, catalyzes the specific phosphorylation of 1,6-anhydro-N-acetylmuramic acid (anhMurNAc) with the simultaneous cleavage of the 1,6-anhydro ring, generating MurNAc-6-P. Is required for the utilization of anhMurNAc either imported from the medium or derived from its own cell wall murein, and thus plays a role in cell wall recycling. In Escherichia coli O45:K1 (strain S88 / ExPEC), this protein is Anhydro-N-acetylmuramic acid kinase.